The chain runs to 157 residues: ATP synthase subunit b (157 aa).

A helical transmembrane segment spans residues 1–21; the sequence is MHFLDESFWLAISFIIFVYLI.

The protein belongs to the ATPase B chain family. As to quaternary structure, F-type ATPases have 2 components, F(1) - the catalytic core - and F(0) - the membrane proton channel. F(1) has five subunits: alpha(3), beta(3), gamma(1), delta(1), epsilon(1). F(0) has three main subunits: a(1), b(2) and c(10-14). The alpha and beta chains form an alternating ring which encloses part of the gamma chain. F(1) is attached to F(0) by a central stalk formed by the gamma and epsilon chains, while a peripheral stalk is formed by the delta and b chains.

Its subcellular location is the cell inner membrane. Its function is as follows. F(1)F(0) ATP synthase produces ATP from ADP in the presence of a proton or sodium gradient. F-type ATPases consist of two structural domains, F(1) containing the extramembraneous catalytic core and F(0) containing the membrane proton channel, linked together by a central stalk and a peripheral stalk. During catalysis, ATP synthesis in the catalytic domain of F(1) is coupled via a rotary mechanism of the central stalk subunits to proton translocation. In terms of biological role, component of the F(0) channel, it forms part of the peripheral stalk, linking F(1) to F(0). The polypeptide is ATP synthase subunit b (Rickettsia bellii (strain RML369-C)).